A 375-amino-acid polypeptide reads, in one-letter code: Queuine tRNA-ribosyltransferase (375 aa).

Asp90 acts as the Proton acceptor in catalysis. Substrate-binding positions include 90–94 (DSGGF), Asp144, Gln193, and Gly220. The RNA binding stretch occupies residues 251–257 (GVGTPED). The active-site Nucleophile is Asp270. The tract at residues 275 to 279 (TRNAR) is RNA binding; important for wobble base 34 recognition. Zn(2+) is bound by residues Cys308, Cys310, Cys313, and His339.

It belongs to the queuine tRNA-ribosyltransferase family. As to quaternary structure, homodimer. Within each dimer, one monomer is responsible for RNA recognition and catalysis, while the other monomer binds to the replacement base PreQ1. Zn(2+) serves as cofactor.

The enzyme catalyses 7-aminomethyl-7-carbaguanine + guanosine(34) in tRNA = 7-aminomethyl-7-carbaguanosine(34) in tRNA + guanine. It participates in tRNA modification; tRNA-queuosine biosynthesis. In terms of biological role, catalyzes the base-exchange of a guanine (G) residue with the queuine precursor 7-aminomethyl-7-deazaguanine (PreQ1) at position 34 (anticodon wobble position) in tRNAs with GU(N) anticodons (tRNA-Asp, -Asn, -His and -Tyr). Catalysis occurs through a double-displacement mechanism. The nucleophile active site attacks the C1' of nucleotide 34 to detach the guanine base from the RNA, forming a covalent enzyme-RNA intermediate. The proton acceptor active site deprotonates the incoming PreQ1, allowing a nucleophilic attack on the C1' of the ribose to form the product. After dissociation, two additional enzymatic reactions on the tRNA convert PreQ1 to queuine (Q), resulting in the hypermodified nucleoside queuosine (7-(((4,5-cis-dihydroxy-2-cyclopenten-1-yl)amino)methyl)-7-deazaguanosine). The sequence is that of Queuine tRNA-ribosyltransferase from Herminiimonas arsenicoxydans.